The primary structure comprises 328 residues: 3-ketodihydrosphingosine reductase TSC10 (328 aa).

Leu-16 provides a ligand contact to NADP(+). Positions 19, 21, and 23 each coordinate NADPH. The short motif at 19–23 (GASQG) is the GXSXG element. Leu-24 contacts NADP(+). Arg-44, Lys-48, and Asp-73 together coordinate NADPH. Asp-73 provides a ligand contact to NADP(+). The active-site Proton donor is Ser-161. Positions 175, 179, and 210 each coordinate NADP(+). Tyr-175 acts as the Proton acceptor in catalysis. Lys-179 acts as the Lowers pKa of active site Tyr in catalysis. A helical transmembrane segment spans residues 277 to 297 (FFQVIVSFIFSIIAPIANYVV).

It belongs to the short-chain dehydrogenases/reductases (SDR) family.

It is found in the endoplasmic reticulum membrane. The enzyme catalyses sphinganine + NADP(+) = 3-oxosphinganine + NADPH + H(+). It functions in the pathway lipid metabolism; sphingolipid metabolism. Catalyzes the reduction of 3'-oxosphinganine (3-ketodihydrosphingosine/KDS) to sphinganine (dihydrosphingosine/DHS), the second step of de novo sphingolipid biosynthesis. In Debaryomyces hansenii (strain ATCC 36239 / CBS 767 / BCRC 21394 / JCM 1990 / NBRC 0083 / IGC 2968) (Yeast), this protein is 3-ketodihydrosphingosine reductase TSC10 (TSC10).